The chain runs to 429 residues: MKLQKPKGTQDILPAESAKWQYVEGFAREIFKRYNYAEVRTPIFEHYEVISRSVGDTTDIVTKEMYDFYDKGDRHITLRPEGTAPVVRSYVENKLFAPEVQKPSKFYYMGPMFRYERPQAGRLRQFHQIGVECFGSSNPATDVETISMAAYFLKEIGIQGVKLHLNTLGNPESRAAYRQALIDYLTPLKETLSKDSQRRLEENPLRVLDSKEKEDKVAVENAPSILDFLDEESQTHFDAVRQMLENLGVDYIIDTNMVRGLDYYNHTIFEFITEIEGNDLTVCAGGRYDGLVAYFGGPETAGFGFGLGVERLLLILEKQGVALPIENALDVYIAVLGDGANVKALELVQALRQQGFKAERDYLNRKLKAQFKSADVFAAKTLITLGESEVESGQVTVKNNQTREEVQVSLETISQNFSEIFEKLGFYTQ.

The protein belongs to the class-II aminoacyl-tRNA synthetase family. As to quaternary structure, homodimer.

Its subcellular location is the cytoplasm. It carries out the reaction tRNA(His) + L-histidine + ATP = L-histidyl-tRNA(His) + AMP + diphosphate + H(+). The polypeptide is Histidine--tRNA ligase (Streptococcus pneumoniae (strain JJA)).